Consider the following 125-residue polypeptide: Small ribosomal subunit protein eS26 (125 aa).

This sequence belongs to the eukaryotic ribosomal protein eS26 family.

The protein is Small ribosomal subunit protein eS26 (RPS26) of Sterkiella nova (Ciliate).